A 232-amino-acid chain; its full sequence is 2,3,4,5-tetrahydropyridine-2,6-dicarboxylate N-acetyltransferase (232 aa).

Belongs to the transferase hexapeptide repeat family. DapH subfamily.

The catalysed reaction is (S)-2,3,4,5-tetrahydrodipicolinate + acetyl-CoA + H2O = L-2-acetamido-6-oxoheptanedioate + CoA. The protein operates within amino-acid biosynthesis; L-lysine biosynthesis via DAP pathway; LL-2,6-diaminopimelate from (S)-tetrahydrodipicolinate (acetylase route): step 1/3. Its function is as follows. Catalyzes the transfer of an acetyl group from acetyl-CoA to tetrahydrodipicolinate. This Streptococcus suis (strain 98HAH33) protein is 2,3,4,5-tetrahydropyridine-2,6-dicarboxylate N-acetyltransferase.